Here is a 144-residue protein sequence, read N- to C-terminus: Large ribosomal subunit protein uL11 (144 aa).

It belongs to the universal ribosomal protein uL11 family. As to quaternary structure, part of the ribosomal stalk of the 50S ribosomal subunit. Interacts with L10 and the large rRNA to form the base of the stalk. L10 forms an elongated spine to which L12 dimers bind in a sequential fashion forming a multimeric L10(L12)X complex. One or more lysine residues are methylated.

Its function is as follows. Forms part of the ribosomal stalk which helps the ribosome interact with GTP-bound translation factors. This chain is Large ribosomal subunit protein uL11, found in Acidiphilium cryptum (strain JF-5).